A 572-amino-acid polypeptide reads, in one-letter code: Oxygen-dependent choline dehydrogenase (572 aa).

9–38 (DYVIIGGGSAGSVLGARLSEDKDKNVLVLE) contacts FAD. His477 acts as the Proton acceptor in catalysis.

The protein belongs to the GMC oxidoreductase family. FAD is required as a cofactor.

It carries out the reaction choline + A = betaine aldehyde + AH2. The enzyme catalyses betaine aldehyde + NAD(+) + H2O = glycine betaine + NADH + 2 H(+). It participates in amine and polyamine biosynthesis; betaine biosynthesis via choline pathway; betaine aldehyde from choline (cytochrome c reductase route): step 1/1. Involved in the biosynthesis of the osmoprotectant glycine betaine. Catalyzes the oxidation of choline to betaine aldehyde and betaine aldehyde to glycine betaine at the same rate. The polypeptide is Oxygen-dependent choline dehydrogenase (Staphylococcus epidermidis (strain ATCC 12228 / FDA PCI 1200)).